The following is a 399-amino-acid chain: MAKEKFSRNKPHVNIGTIGHVDHGKTTLTAAISAVLSRKGLAELKDYDNIDNAPEEKERGITIATSHIEYETEKRHYAHVDCPGHADYVKNMITGAAQMDGAILVVSAADGPMPQTREHILLSRQVGVPYIVVFMNKADMVDDAELLELVEMEIRELLNEYNFPGDDTPIVSGSALKALEEAKAGQDGEWSAKIMELMDAVDSYIPTPVRATDKDLLMPIEDVFSISGRGTVVTGRIEKGVVKVGDTIEIVGIKPTQTTTVTGVEMFRKEMDQGEAGDNVGVLLRGTKKEDVERGMVLCKPKSITPHTKFEGEVYILTKEEGGRHTPFFNNYRPQFYVRTTDVTGSITLPEGTEMVMPGDNVRISVELIAPVALEEGTRFAIREGGRTVGSGVVSKILG.

Residues 10-209 (KPHVNIGTIG…AVDSYIPTPV (200 aa)) enclose the tr-type G domain. A G1 region spans residues 19–26 (GHVDHGKT). A GTP-binding site is contributed by 19-26 (GHVDHGKT). Threonine 26 contacts Mg(2+). Residues 60-64 (GITIA) are G2. Residues 81–84 (DCPG) form a G3 region. Residues 81 to 85 (DCPGH) and 136 to 139 (NKAD) each bind GTP. The segment at 136 to 139 (NKAD) is G4. Residues 174-176 (SAL) form a G5 region.

It belongs to the TRAFAC class translation factor GTPase superfamily. Classic translation factor GTPase family. EF-Tu/EF-1A subfamily. Monomer.

The protein resides in the cytoplasm. It catalyses the reaction GTP + H2O = GDP + phosphate + H(+). In terms of biological role, GTP hydrolase that promotes the GTP-dependent binding of aminoacyl-tRNA to the A-site of ribosomes during protein biosynthesis. The protein is Elongation factor Tu of Campylobacter concisus (strain 13826).